Consider the following 359-residue polypeptide: Carbamoyl phosphate synthase arginine-specific small chain (359 aa).

The segment at 1-168 (MKAYLVLATG…VETFEGNGPH (168 aa)) is CPSase. The L-glutamine site is built by Ser45, Gly216, and Gly218. The Glutamine amidotransferase type-1 domain occupies 168–355 (HIVLIDYGFK…IDDVAAKGRE (188 aa)). Cys243 functions as the Nucleophile in the catalytic mechanism. Residues Leu244, Gln247, Asn285, and Tyr288 each coordinate L-glutamine. Residues His328 and Glu330 contribute to the active site.

The protein belongs to the CarA family. In terms of assembly, composed of two chains; the small (or glutamine) chain promotes the hydrolysis of glutamine to ammonia, which is used by the large (or ammonia) chain to synthesize carbamoyl phosphate. Tetramer of heterodimers (alpha,beta)4.

The enzyme catalyses hydrogencarbonate + L-glutamine + 2 ATP + H2O = carbamoyl phosphate + L-glutamate + 2 ADP + phosphate + 2 H(+). It carries out the reaction L-glutamine + H2O = L-glutamate + NH4(+). Its pathway is amino-acid biosynthesis; L-arginine biosynthesis; carbamoyl phosphate from bicarbonate: step 1/1. Small subunit of the glutamine-dependent carbamoyl phosphate synthetase (CPSase). CPSase catalyzes the formation of carbamoyl phosphate from the ammonia moiety of glutamine, carbonate, and phosphate donated by ATP, constituting the first step of the biosynthetic pathway leading to arginine and/or urea. The small subunit (glutamine amidotransferase) binds and cleaves glutamine to supply the large subunit with the substrate ammonia. The chain is Carbamoyl phosphate synthase arginine-specific small chain from Halalkalibacterium halodurans (strain ATCC BAA-125 / DSM 18197 / FERM 7344 / JCM 9153 / C-125) (Bacillus halodurans).